The chain runs to 122 residues: Large ribosomal subunit protein uL14 (122 aa).

Belongs to the universal ribosomal protein uL14 family. Part of the 50S ribosomal subunit. Forms a cluster with proteins L3 and L19. In the 70S ribosome, L14 and L19 interact and together make contacts with the 16S rRNA in bridges B5 and B8.

Its function is as follows. Binds to 23S rRNA. Forms part of two intersubunit bridges in the 70S ribosome. In Sulfurimonas denitrificans (strain ATCC 33889 / DSM 1251) (Thiomicrospira denitrificans (strain ATCC 33889 / DSM 1251)), this protein is Large ribosomal subunit protein uL14.